Consider the following 215-residue polypeptide: Adenylyl-sulfate kinase (215 aa).

Residue 46 to 53 participates in ATP binding; sequence GLSGAGKS. The active-site Phosphoserine intermediate is Ser-120.

The protein belongs to the APS kinase family.

It carries out the reaction adenosine 5'-phosphosulfate + ATP = 3'-phosphoadenylyl sulfate + ADP + H(+). It participates in sulfur metabolism; hydrogen sulfide biosynthesis; sulfite from sulfate: step 2/3. In terms of biological role, catalyzes the synthesis of activated sulfate. The chain is Adenylyl-sulfate kinase (cysC) from Vibrio cholerae serotype O1 (strain ATCC 39315 / El Tor Inaba N16961).